Here is a 141-residue protein sequence, read N- to C-terminus: Large ribosomal subunit protein uL11 (141 aa).

Belongs to the universal ribosomal protein uL11 family. In terms of assembly, part of the ribosomal stalk of the 50S ribosomal subunit. Interacts with L10 and the large rRNA to form the base of the stalk. L10 forms an elongated spine to which L12 dimers bind in a sequential fashion forming a multimeric L10(L12)X complex. In terms of processing, one or more lysine residues are methylated.

Forms part of the ribosomal stalk which helps the ribosome interact with GTP-bound translation factors. The protein is Large ribosomal subunit protein uL11 of Chlamydia caviae (strain ATCC VR-813 / DSM 19441 / 03DC25 / GPIC) (Chlamydophila caviae).